Reading from the N-terminus, the 431-residue chain is MANSC domain-containing protein 1 (431 aa).

The signal sequence occupies residues 1–26; that stretch reads MFFGGKGSLTYTLVIICFLTLRLAAS. Residues 27–385 lie on the Extracellular side of the membrane; sequence QNCLNKSLED…QYGLPFEKWL (359 aa). N-linked (GlcNAc...) asparagine glycosylation is present at Asn31. Residues 33-117 enclose the MANSC domain; the sequence is SLEDVVIDIQ…LKPAKGLRSY (85 aa). N-linked (GlcNAc...) asparagine glycans are attached at residues Asn222 and Asn251. A disordered region spans residues 236–279; that stretch reads HTTSATPKPAIRLPTNASVTPSGTSQPQLATTSPPVTTVTSQPP. Over residues 250–265 the composition is skewed to polar residues; that stretch reads TNASVTPSGTSQPQLA. Positions 266–279 are enriched in low complexity; that stretch reads TTSPPVTTVTSQPP. 2 N-linked (GlcNAc...) asparagine glycosylation sites follow: Asn327 and Asn352. Residues 352 to 372 are disordered; that stretch reads NKTASWEGREASPGRSSQGNV. Residues 386-408 traverse the membrane as a helical segment; it reads LIGSLLFGVLFLVIGLVLLGRIL. Residues 409-431 lie on the Cytoplasmic side of the membrane; sequence SESLRRKRYSRLDYLINGIYVDI.

It is found in the membrane. This is MANSC domain-containing protein 1 (MANSC1) from Macaca fascicularis (Crab-eating macaque).